We begin with the raw amino-acid sequence, 80 residues long: RNA-binding protein KhpA (80 aa).

The KH domain occupies 33–80 (GRTVEVHVHPDDLGKVIGRGGRTATALRTLVAGIGGRGIRVDVVDTDQ).

It belongs to the KhpA RNA-binding protein family.

The protein resides in the cytoplasm. Its function is as follows. A probable RNA-binding protein. The protein is RNA-binding protein KhpA of Mycobacterium bovis (strain ATCC BAA-935 / AF2122/97).